We begin with the raw amino-acid sequence, 1792 residues long: BTB/POZ domain-containing protein 8 (1792 aa).

2 BTB domains span residues 58 to 127 and 206 to 273; these read TDVT…NIKN and PDID…DIPD. Disordered regions lie at residues 528-554, 581-658, 670-692, 707-768, 788-815, 831-989, 1151-1283, and 1519-1607; these read DKGD…SDSG, SDGL…PRQV, TGQK…SGAR, KPLK…CDSP, SRPV…NNSV, AILK…KPHK, ERTN…SNDR, and SIDS…KSLD. Polar residues-rich tracts occupy residues 541 to 552 and 588 to 601; these read FSSSQQRKQVSD and GHSS…INKT. Basic and acidic residues-rich tracts occupy residues 602-625 and 640-650; these read LKQD…ELKT and SKTENGDKARL. A compositionally biased stretch (polar residues) spans 724–740; that stretch reads GPSSRSTDSSMEFSIST. The segment covering 744-758 has biased composition (basic and acidic residues); the sequence is DEPKENGSTEEEKPS. The span at 838 to 865 shows a compositional bias: polar residues; that stretch reads TSNGCTAAQQRTKSTPSNLTKTQGSQGE. Residues 866–877 are compositionally biased toward low complexity; the sequence is SPNSVKSSVSSR. Composition is skewed to basic and acidic residues over residues 878–891 and 927–939; these read QSDE…HNTT and KKGE…DSKQ. A compositionally biased stretch (polar residues) spans 947–956; that stretch reads ISKTQPSSQR. The segment covering 969–987 has biased composition (basic and acidic residues); that stretch reads MFHDVRDNNNKDSVSEQKP. Composition is skewed to polar residues over residues 1151–1160 and 1195–1215; these read ERTNGTLNSA and SDVS…PKNM. Residues 1250 to 1259 show a composition bias toward low complexity; that stretch reads SDTGSATTSS. Residues 1566–1594 are compositionally biased toward basic and acidic residues; that stretch reads IQQRSKFLDSDVKSQERPCHLDLHQREPN. Positions 1597 to 1607 are enriched in polar residues; sequence IPKNSSTKSLD.

As to quaternary structure, interacts (via N-terminus) with adapter protein complex AP-2 subunits alpha (AP2A1) and beta (AP2B1). In terms of tissue distribution, highly expressed in fetal brain. Weakly expressed in adult brain and prostate.

Its subcellular location is the cell projection. The protein localises to the axon. It localises to the presynapse. The protein resides in the cytoplasmic vesicle. It is found in the clathrin-coated vesicle. Its subcellular location is the nucleus. In terms of biological role, involved in clathrin-mediated endocytosis at the synapse. Plays a role in neuronal development and in synaptic vesicle recycling in mature neurons, a process required for normal synaptic transmission. This is BTB/POZ domain-containing protein 8 from Homo sapiens (Human).